Reading from the N-terminus, the 315-residue chain is Ferrochelatase (315 aa).

Residues histidine 193 and glutamate 273 each coordinate Fe cation.

The protein belongs to the ferrochelatase family.

It localises to the cytoplasm. It carries out the reaction heme b + 2 H(+) = protoporphyrin IX + Fe(2+). It functions in the pathway porphyrin-containing compound metabolism; protoheme biosynthesis; protoheme from protoporphyrin-IX: step 1/1. Catalyzes the ferrous insertion into protoporphyrin IX. This chain is Ferrochelatase, found in Wolbachia sp. subsp. Drosophila simulans (strain wRi).